Reading from the N-terminus, the 90-residue chain is Aminoacyl carrier protein 1 (90 aa).

A Carrier domain is found at 6–84 (TDVRNRIIKL…TLERMVMTQL (79 aa)). Residue Ser42 is modified to O-(pantetheine 4'-phosphoryl)serine.

Post-translationally, 4'-phosphopantetheine is transferred from CoA to a specific serine of the apo-form of this carrier protein.

In terms of biological role, aminoacyl carrier protein. Can be charged with L-glycine via the formation of a thioester bond between the amino acid and the 4'-phosphopantetheinyl prosthetic group, catalyzed by the bll0957 ligase. In Bradyrhizobium diazoefficiens (strain JCM 10833 / BCRC 13528 / IAM 13628 / NBRC 14792 / USDA 110), this protein is Aminoacyl carrier protein 1.